Here is a 262-residue protein sequence, read N- to C-terminus: Glutamate racemase (262 aa).

Substrate contacts are provided by residues 5-6 and 37-38; these read DS and YG. Cys-69 acts as the Proton donor/acceptor in catalysis. Residue 70–71 coordinates substrate; sequence NT. Cys-181 acts as the Proton donor/acceptor in catalysis. 182 to 183 is a substrate binding site; sequence TH.

Belongs to the aspartate/glutamate racemases family.

The catalysed reaction is L-glutamate = D-glutamate. The protein operates within cell wall biogenesis; peptidoglycan biosynthesis. Its function is as follows. Provides the (R)-glutamate required for cell wall biosynthesis. This chain is Glutamate racemase, found in Buchnera aphidicola subsp. Acyrthosiphon pisum (strain 5A).